The sequence spans 541 residues: 2-hydroxyacylsphingosine 1-beta-galactosyltransferase (541 aa).

The first 20 residues, methionine 1–alanine 20, serve as a signal peptide directing secretion. N-linked (GlcNAc...) asparagine glycosylation is found at asparagine 78, asparagine 333, and asparagine 442. The chain crosses the membrane as a helical span at residues tyrosine 472–valine 492.

It belongs to the UDP-glycosyltransferase family. As to expression, brain, restricted to the oligodendrocyte-containing cell layers of cerebrum and cerebellum.

It localises to the membrane. The protein resides in the endoplasmic reticulum. It carries out the reaction an N-acylsphing-4-enine + UDP-alpha-D-galactose = a beta-D-galactosyl-(1&lt;-&gt;1')-N-acylsphing-4-enine + UDP + H(+). The catalysed reaction is N-(2-hydroxy-hexanoyl)-sphing-4-enine + UDP-alpha-D-galactose = N-(2-hydroxy-hexanoyl)-beta-D-galactosyl-sphing-4-enine + UDP + H(+). The enzyme catalyses N-(2-hydroxy-hexanoyl)-sphinganine + UDP-alpha-D-galactose = N-(2-hydroxyhexanoyl)-beta-D-galactosylsphinganine + UDP + H(+). It catalyses the reaction an N-acyl-sphingoid base + UDP-alpha-D-galactose = a D-galactosylceramide + UDP + H(+). Its pathway is sphingolipid metabolism; galactosylceramide biosynthesis. Its function is as follows. Catalyzes the transfer of galactose to ceramide, a key enzymatic step in the biosynthesis of galactocerebrosides, which are abundant sphingolipids of the myelin membrane of the central nervous system and peripheral nervous system. Galactosylates both hydroxy- and non-hydroxy fatty acid-containing ceramides and diglycerides. This is 2-hydroxyacylsphingosine 1-beta-galactosyltransferase from Rattus norvegicus (Rat).